Consider the following 463-residue polypeptide: Putative WAS protein family homolog 3 (463 aa).

The tract at residues 1 to 54 (MTPVRMQHSLAGQTYAVPLIQPDLRREEAVQQMADALQYLQKVSGDIFSRISQQ) is required for WASH complex assembly. Residues 1–165 (MTPVRMQHSL…EGLGGLPSNI (165 aa)) form a WHD1 region. Lysine 218 participates in a covalent cross-link: Glycyl lysine isopeptide (Lys-Gly) (interchain with G-Cter in ubiquitin). Positions 295–463 (QDGVLTPPPP…AEEDEDDWES (169 aa)) are disordered. Residues 300 to 312 (TPPPPPPPPPPAP) are compositionally biased toward pro residues. Residues 347–463 (QGAPREVVDP…AEEDEDDWES (117 aa)) form a VCA region. A WH2 domain is found at 359 to 381 (GRATLLESIRQAGGIGKAKLRSM). Basic and acidic residues predominate over residues 380 to 396 (SMKERKLEKKQQKEQEQ). The span at 422–434 (SGKGPGAGEGPGG) shows a compositional bias: gly residues. Residues 454–463 (AEEDEDDWES) show a composition bias toward acidic residues.

The protein belongs to the WASH1 family. In terms of assembly, component of the WASH core complex also described as WASH regulatory complex (SHRC) composed of WASH (WASHC1, WASH2P or WASH3P), WASHC2 (WASHC2A or WASHC2C), WASHC3, WASHC4 and WASHC5. The WASH core complex associates with the F-actin-capping protein dimer (formed by CAPZA1, CAPZA2 or CAPZA3 and CAPZB) in a transient or substoichiometric manner which was initially described as WASH complex. Interacts (via WHD1 region) with WASHC2C; the interaction is direct. Interacts with alpha-tubulin. Interacts with BECN1; WASHC1 and AMBRA1 can competitively interact with BECN1. Interacts with BLOC1S2; may associate with the BLOC-1 complex. Interacts with tubulin gamma chain (TUBG1 or TUBG2). Interacts with EXOC1, EXOC4, EXOC8; in MMP14-positive endosomes in breast tumor cells; indicative for an association with the exocyst complex.

It localises to the early endosome. It is found in the early endosome membrane. The protein localises to the recycling endosome membrane. Its subcellular location is the cell projection. The protein resides in the lamellipodium. It localises to the filopodium. It is found in the cytoplasmic vesicle. The protein localises to the autophagosome. Its subcellular location is the cytoplasm. The protein resides in the cytoskeleton. It localises to the microtubule organizing center. It is found in the centrosome. The protein localises to the centriole. Acts as a nucleation-promoting factor at the surface of endosomes, where it recruits and activates the Arp2/3 complex to induce actin polymerization, playing a key role in the fission of tubules that serve as transport intermediates during endosome sorting. Involved in endocytic trafficking of EGF. Involved in transferrin receptor recycling. Regulates the trafficking of endosomal alpha5beta1 integrin to the plasma membrane and involved in invasive cell migration. In T-cells involved in endosome-to-membrane recycling of receptors including T-cell receptor (TCR), CD28 and ITGAL; proposed to be implicated in T cell proliferation and effector function. In dendritic cells involved in endosome-to-membrane recycling of major histocompatibility complex (MHC) class II probably involving retromer and subsequently allowing antigen sampling, loading and presentation during T-cell activation. Involved in Arp2/3 complex-dependent actin assembly driving Salmonella typhimurium invasion independent of ruffling. Involved in the exocytosis of MMP14 leading to matrix remodeling during invasive migration and implicating late endosome-to-plasma membrane tubular connections and cooperation with the exocyst complex. Involved in negative regulation of autophagy independently from its role in endosomal sorting by inhibiting BECN1 ubiquitination to inactivate PIK3C3/Vps34 activity. The polypeptide is Putative WAS protein family homolog 3 (WASH3P) (Homo sapiens (Human)).